A 318-amino-acid polypeptide reads, in one-letter code: Homoserine kinase (318 aa).

97–107 (PIGSGLGSSAC) is an ATP binding site.

The protein belongs to the GHMP kinase family. Homoserine kinase subfamily.

The protein localises to the cytoplasm. It carries out the reaction L-homoserine + ATP = O-phospho-L-homoserine + ADP + H(+). It functions in the pathway amino-acid biosynthesis; L-threonine biosynthesis; L-threonine from L-aspartate: step 4/5. In terms of biological role, catalyzes the ATP-dependent phosphorylation of L-homoserine to L-homoserine phosphate. The sequence is that of Homoserine kinase from Vibrio atlanticus (strain LGP32) (Vibrio splendidus (strain Mel32)).